The following is a 496-amino-acid chain: PE-PGRS family protein PE_PGRS1 (496 aa).

A PE domain is found at 4–94 (LITSPATVAA…VCYAAAETAN (91 aa)). The tract at residues 461–480 (LIGNGGDGGPGMFGGPGGAG) is disordered.

The protein belongs to the mycobacterial PE family. PGRS subfamily.

The protein resides in the secreted. It is found in the cell wall. Its subcellular location is the host mitochondrion. In terms of biological role, when expressed in host mitochondria, induces mitochondrial stress which results in mitochondrial membrane depolarization, up-regulation of mitochondrial superoxides and release of cytochrome-C in the cytoplasm. The cytochrome-C in cytoplasm triggers the activation of caspase-9, caspase-3 and caspase-7, leading to the apoptosis of host macrophages. Being a late expressing protein, apoptosis induction by PE_PGRS1 may facilitate the M.tuberculosis survival and silent expansion of its niche at the site of granuloma. When expressed in THP-1 macrophages, promotes the survival of mycobacteria within macrophages after a 24- to 48-hour infection by blocking endoplasmic reticulum stress and inhibiting host cell apoptosis. Can chelate excessive intracellular calcium in THP-1 macrophages, which reduces the concentration of intracellular free Ca(2+) and blocks the PERK-eIF2alpha-ATF4 axis, thereby inhibiting the endoplasmic reticulum stress caused by infection. It also reduces the apoptosis of THP-1 macrophages by decreasing the activation of caspase-3 and caspase-9. The protein is PE-PGRS family protein PE_PGRS1 of Mycobacterium tuberculosis (strain ATCC 25618 / H37Rv).